A 126-amino-acid chain; its full sequence is Large ribosomal subunit protein bL12 (126 aa).

This sequence belongs to the bacterial ribosomal protein bL12 family. As to quaternary structure, homodimer. Part of the ribosomal stalk of the 50S ribosomal subunit. Forms a multimeric L10(L12)X complex, where L10 forms an elongated spine to which 2 to 4 L12 dimers bind in a sequential fashion. Binds GTP-bound translation factors.

Functionally, forms part of the ribosomal stalk which helps the ribosome interact with GTP-bound translation factors. Is thus essential for accurate translation. The protein is Large ribosomal subunit protein bL12 of Elusimicrobium minutum (strain Pei191).